The following is a 416-amino-acid chain: MRKLFLLGFIVAGLVLGNEANGYLEFNVTELDRIEDLEFGFSKFSSNFNPLMVGLTLIRGAGSKGAVCLDGTLPGYHLHRGHGSGANSWLIQLEGGGWCDNIRNCVYRKKSRRGSSNYMEKQIQFTGILSNKAQENPDFFNWNRVKLRYCDGGSFSGDSQNKAARLQFRGEKIWRAAMDDLKAKGMRNAKQALLSGCSAGGLAVILRCDEFRNLFSGWTRVKCLSDAGLFLDTPDVSGGHTIRNLYNGVVQLQGVKNNLPHLCTNHLNPTSCFFPQNLISQMKTPLFIVNAAYDIWQIQSSIAPPSADPSGYWHECRLNHGRCTPAQIRFLQGFRNQMLRAVSGFSNSKKNGLFINSCFAHCQTERQDTWFADDSPVIHKKAVAIAVGDWYFDRAEVKLIDCPYPCDRSCHNLVFR.

The N-terminal stretch at 1–20 (MRKLFLLGFIVAGLVLGNEA) is a signal peptide. N-linked (GlcNAc...) asparagine glycosylation is present at asparagine 27. Active-site charge relay system residues include serine 198, aspartate 294, and histidine 361.

Belongs to the pectinacetylesterase family.

The protein resides in the secreted. It localises to the cell wall. Hydrolyzes acetyl esters in homogalacturonan regions of pectin. In type I primary cell wall, galacturonic acid residues of pectin can be acetylated at the O-2 and O-3 positions. Decreasing the degree of acetylation of pectin gels in vitro alters their physical properties. The sequence is that of Pectin acetylesterase 10 from Arabidopsis thaliana (Mouse-ear cress).